A 267-amino-acid chain; its full sequence is Methyl-coenzyme M reductase II subunit gamma (267 aa).

Residue arginine 123 participates in coenzyme M binding.

The protein belongs to the methyl-coenzyme M reductase gamma subunit family. As to quaternary structure, MCR is a hexamer of two alpha, two beta, and two gamma chains, forming a dimer of heterotrimers. Coenzyme F430 serves as cofactor.

The catalysed reaction is coenzyme B + methyl-coenzyme M = methane + coenzyme M-coenzyme B heterodisulfide. The protein operates within one-carbon metabolism; methyl-coenzyme M reduction; methane from methyl-coenzyme M: step 1/1. Its function is as follows. Component of the methyl-coenzyme M reductase (MCR) I that catalyzes the reductive cleavage of methyl-coenzyme M (CoM-S-CH3 or 2-(methylthio)ethanesulfonate) using coenzyme B (CoB or 7-mercaptoheptanoylthreonine phosphate) as reductant which results in the production of methane and the mixed heterodisulfide of CoB and CoM (CoM-S-S-CoB). This is the final step in methanogenesis. The polypeptide is Methyl-coenzyme M reductase II subunit gamma (mrtG) (Methanothermus fervidus (strain ATCC 43054 / DSM 2088 / JCM 10308 / V24 S)).